We begin with the raw amino-acid sequence, 276 residues long: NAD-capped RNA hydrolase NudC (276 aa).

Arginine 82 provides a ligand contact to substrate. 2 residues coordinate Zn(2+): cysteine 112 and cysteine 115. A substrate-binding site is contributed by glutamate 125. 2 residues coordinate Zn(2+): cysteine 130 and cysteine 133. Tyrosine 138 provides a ligand contact to substrate. Positions 139–262 constitute a Nudix hydrolase domain; it reads PRISPSMIVL…SIARYLIDVY (124 aa). A divalent metal cation-binding residues include alanine 172, glutamate 188, and glutamate 192. Positions 173-194 match the Nudix box motif; it reads GFAEPGESAEDCLIREVREEVQ. Residue 206-213 participates in substrate binding; it reads QCWPFPHS. A divalent metal cation is bound at residue glutamate 233. Residue alanine 255 coordinates substrate.

The protein belongs to the Nudix hydrolase family. NudC subfamily. In terms of assembly, homodimer. Requires Mg(2+) as cofactor. Mn(2+) is required as a cofactor. Zn(2+) serves as cofactor.

The catalysed reaction is a 5'-end NAD(+)-phospho-ribonucleoside in mRNA + H2O = a 5'-end phospho-adenosine-phospho-ribonucleoside in mRNA + beta-nicotinamide D-ribonucleotide + 2 H(+). It carries out the reaction NAD(+) + H2O = beta-nicotinamide D-ribonucleotide + AMP + 2 H(+). The enzyme catalyses NADH + H2O = reduced beta-nicotinamide D-ribonucleotide + AMP + 2 H(+). In terms of biological role, mRNA decapping enzyme that specifically removes the nicotinamide adenine dinucleotide (NAD) cap from a subset of mRNAs by hydrolyzing the diphosphate linkage to produce nicotinamide mononucleotide (NMN) and 5' monophosphate mRNA. The NAD-cap is present at the 5'-end of some mRNAs and stabilizes RNA against 5'-processing. Has preference for mRNAs with a 5'-end purine. Catalyzes the hydrolysis of a broad range of dinucleotide pyrophosphates. This Pseudomonas fluorescens (strain Pf0-1) protein is NAD-capped RNA hydrolase NudC.